We begin with the raw amino-acid sequence, 308 residues long: Shikimate kinase 1, chloroplastic (308 aa).

Residues 1 to 62 constitute a chloroplast transit peptide; it reads MEAGVGLALQ…RGSKPVAPLR (62 aa). 103-110 contacts ATP; that stretch reads GMMGSGKS. Residue serine 110 participates in Mg(2+) binding. 3 residues coordinate substrate: aspartate 128, arginine 153, and glycine 175. Arginine 214 provides a ligand contact to ATP.

The protein belongs to the shikimate kinase family. Mg(2+) serves as cofactor. As to expression, expressed in panicles.

It localises to the plastid. The protein localises to the chloroplast. The catalysed reaction is shikimate + ATP = 3-phosphoshikimate + ADP + H(+). The protein operates within metabolic intermediate biosynthesis; chorismate biosynthesis; chorismate from D-erythrose 4-phosphate and phosphoenolpyruvate: step 5/7. In terms of biological role, catalyzes the specific phosphorylation of the 3-hydroxyl group of shikimic acid using ATP as a cosubstrate. In Oryza sativa subsp. japonica (Rice), this protein is Shikimate kinase 1, chloroplastic (SK1).